A 137-amino-acid polypeptide reads, in one-letter code: Fluoride-specific ion channel FluC 1 (137 aa).

The next 4 helical transmembrane spans lie at 4-24 (LIYI…YYLG), 37-57 (LATL…TTYI), 67-87 (VITG…TLSV), and 98-118 (WGIA…MSGL). 2 residues coordinate Na(+): Gly77 and Thr80.

It belongs to the fluoride channel Fluc/FEX (TC 1.A.43) family.

The protein localises to the cell membrane. The catalysed reaction is fluoride(in) = fluoride(out). Its activity is regulated as follows. Na(+) is not transported, but it plays an essential structural role and its presence is essential for fluoride channel function. Its function is as follows. Fluoride-specific ion channel. Important for reducing fluoride concentration in the cell, thus reducing its toxicity. This chain is Fluoride-specific ion channel FluC 1, found in Bacillus anthracis.